We begin with the raw amino-acid sequence, 1005 residues long: Non-structural polyprotein 1A (1005 aa).

A run of 4 helical transmembrane segments spans residues 239–259 (PDGA…MDYM), 286–306 (DEIV…SLAY), 313–333 (VLIL…ALVA), and 344–364 (TLVL…YGLG). Residues H524, D556, and S621 each act as charge relay system; for serine protease activity in the active site. Residue Y753 is modified to O-(5'-phospho-RNA)-tyrosine. Residues 940 to 984 (PVIQQVEQQPQVEQQQQPQQPVVEEKKRTPPPKPQRKPKTGAKAK) form a disordered region. Residues 941-961 (VIQQVEQQPQVEQQQQPQQPV) show a composition bias toward low complexity.

The protein belongs to the astroviridae polyprotein 1A family. In terms of assembly, monomer. In terms of processing, cleaved by the viral and host proteases. The protease is probably autocatalytically cleaved.

The protein localises to the host membrane. The catalysed reaction is RNA(n) + a ribonucleoside 5'-triphosphate = RNA(n+1) + diphosphate. Its function is as follows. Responsible for the cleavage of the polyprotein into functional products. In terms of biological role, protein covalently attached to the 5' extremity of the genomic and subgenomic RNAs. It may serve as a primer for the replicase. The chain is Non-structural polyprotein 1A (ORF1) from Avian nephritis virus 1 (ANV-1).